Reading from the N-terminus, the 321-residue chain is tRNA dimethylallyltransferase (321 aa).

Residue 25–32 (GPTASGKS) coordinates ATP. 27–32 (TASGKS) serves as a coordination point for substrate. The interaction with substrate tRNA stretch occupies residues 50-53 (DSMQ).

The protein belongs to the IPP transferase family. In terms of assembly, monomer. Mg(2+) serves as cofactor.

It carries out the reaction adenosine(37) in tRNA + dimethylallyl diphosphate = N(6)-dimethylallyladenosine(37) in tRNA + diphosphate. Catalyzes the transfer of a dimethylallyl group onto the adenine at position 37 in tRNAs that read codons beginning with uridine, leading to the formation of N6-(dimethylallyl)adenosine (i(6)A). This Rhodopseudomonas palustris (strain ATCC BAA-98 / CGA009) protein is tRNA dimethylallyltransferase.